The primary structure comprises 171 residues: S-ribosylhomocysteine lyase (171 aa).

Fe cation contacts are provided by His-54, His-58, and Cys-128.

It belongs to the LuxS family. Homodimer. Requires Fe cation as cofactor.

It carries out the reaction S-(5-deoxy-D-ribos-5-yl)-L-homocysteine = (S)-4,5-dihydroxypentane-2,3-dione + L-homocysteine. In terms of biological role, involved in the synthesis of autoinducer 2 (AI-2) which is secreted by bacteria and is used to communicate both the cell density and the metabolic potential of the environment. The regulation of gene expression in response to changes in cell density is called quorum sensing. Catalyzes the transformation of S-ribosylhomocysteine (RHC) to homocysteine (HC) and 4,5-dihydroxy-2,3-pentadione (DPD). The sequence is that of S-ribosylhomocysteine lyase from Yersinia enterocolitica serotype O:8 / biotype 1B (strain NCTC 13174 / 8081).